We begin with the raw amino-acid sequence, 874 residues long: Alanine--tRNA ligase (874 aa).

Zn(2+) contacts are provided by histidine 562, histidine 566, cysteine 663, and histidine 667.

Belongs to the class-II aminoacyl-tRNA synthetase family. The cofactor is Zn(2+).

The protein localises to the cytoplasm. The catalysed reaction is tRNA(Ala) + L-alanine + ATP = L-alanyl-tRNA(Ala) + AMP + diphosphate. Catalyzes the attachment of alanine to tRNA(Ala) in a two-step reaction: alanine is first activated by ATP to form Ala-AMP and then transferred to the acceptor end of tRNA(Ala). Also edits incorrectly charged Ser-tRNA(Ala) and Gly-tRNA(Ala) via its editing domain. The polypeptide is Alanine--tRNA ligase (Bordetella pertussis (strain Tohama I / ATCC BAA-589 / NCTC 13251)).